The chain runs to 364 residues: Glycine oxidase (364 aa).

Residues 12–13 (VI), 32–33 (ER), 40–41 (AS), 45–47 (GGI), and Val173 contribute to the FAD site. Substrate is bound at residue Arg302. 327–333 (HYRNGLV) provides a ligand contact to FAD.

This sequence belongs to the DAO family. ThiO subfamily. As to quaternary structure, monomer. Requires FAD as cofactor.

The catalysed reaction is glycine + O2 + H2O = glyoxylate + H2O2 + NH4(+). It carries out the reaction sarcosine + O2 + H2O = methylamine + glyoxylate + H2O2. It participates in cofactor biosynthesis; thiamine diphosphate biosynthesis. Its function is as follows. Catalyzes the oxidation of glycine, leading to glyoxyl imine and hydrogen peroxide as primary products; glyoxyl imine is used for the biosynthesis of the thiazole ring of thiamine. Otherwise, glyoxyl imine is spontaneously hydrolyzed in water to produce glyoxylate and ammonia. Can also use sarcosine (N-methylglycine) as substrate. This Pseudomonas aeruginosa (strain ATCC 15692 / DSM 22644 / CIP 104116 / JCM 14847 / LMG 12228 / 1C / PRS 101 / PAO1) protein is Glycine oxidase.